The chain runs to 186 residues: Biofilm operon icaADBC HTH-type negative transcriptional regulator IcaR (186 aa).

The 59-residue stretch at 1 to 59 (MKDKIIDNAITLFSEKGYDGTTLDDIAKSVNIKKASLYYHFDSKKSIYEQSVKCCFDYL) folds into the HTH tetR-type domain. Residues 22 to 41 (TLDDIAKSVNIKKASLYYHF) constitute a DNA-binding region (H-T-H motif).

As to quaternary structure, homodimer.

Functionally, represses transcription of the icaADBC operon necessary for biofilm production. The polypeptide is Biofilm operon icaADBC HTH-type negative transcriptional regulator IcaR (icaR) (Staphylococcus aureus (strain NCTC 8325 / PS 47)).